Here is a 72-residue protein sequence, read N- to C-terminus: Large ribosomal subunit protein bL31 (72 aa).

Residues Cys-16, Cys-18, Cys-38, and Cys-41 each coordinate Zn(2+).

This sequence belongs to the bacterial ribosomal protein bL31 family. Type A subfamily. In terms of assembly, part of the 50S ribosomal subunit. It depends on Zn(2+) as a cofactor.

Binds the 23S rRNA. The chain is Large ribosomal subunit protein bL31 from Francisella tularensis subsp. holarctica (strain LVS).